We begin with the raw amino-acid sequence, 193 residues long: Probable GTP-binding protein EngB (193 aa).

An EngB-type G domain is found at 20 to 193; that stretch reads GVPEVAFAGR…ELAHEISRCI (174 aa). GTP is bound by residues 28 to 35, 55 to 59, 73 to 76, 140 to 143, and 171 to 176; these read GRSNVGKS, GSTRQ, DLPG, TKAD, and IMWVSS. Positions 35 and 57 each coordinate Mg(2+).

The protein belongs to the TRAFAC class TrmE-Era-EngA-EngB-Septin-like GTPase superfamily. EngB GTPase family. Requires Mg(2+) as cofactor.

Its function is as follows. Necessary for normal cell division and for the maintenance of normal septation. The polypeptide is Probable GTP-binding protein EngB (Anaplasma phagocytophilum (strain HZ)).